The sequence spans 904 residues: MSRFFAGGSESDSDSSSDSEPIQRQTAPQFTFSDEEEDVKRVVRSTKEKRYEDLSNIIKSIRNYKKIKDMSSLLSSFEDLTRAYAKALPVITKEENGVCPRFIIRALAELEDFINEVWDDREGRKNLSKNNSKSLGALRQKFRKYIKDFDSDLKKFRESPDAADDEDEEEEKKEEEESDDEEAAVVPAAKAVSFKKDTVEKVKVEKDDDDSDDSIDWGQDSDSDESSSEEEAYGANIRERFLKRPEKEDGDDGEKKKEKKKTKETKDSRKKKRVEDDDDEGWESSATSEKPKMFAKDAEIDVALVVNKLNEVMAARGKKRTDRKLQIEFLRELRAISEEKKLGAAVAAKIRFNIVSAIFDYNPKVSEPMKLEHWSKLLEEIQALIKLLLANEDIVLSENILDENEEYDTAPYKIRGCMLTAVERLDDEFTKLLKECDPHSNEYVDRLKDEVTVTNVIEQVVQYVERLGNEMETCRIYLRKIDHLYYKFDPNVLKKRKAQLPASSLTSVDEMERLCRFIYAKDQTDRLRTRAILSHIFHHALHDNWFQARDLVLMSHLQETIHHSDPPTQILYNRTMANLGLCAFRHGNIKDAHQCLVDLMMTGKPKELLAQGLVPQRQNERSLEQEKVEKQRQMPFHMHINLELLECVYLVSAMLLEIPYMAAHEFDARRRMISKTFYQQLRSSERQSLVGPPESMREHVVAAAKAMRHGDWQACSNFIVNKKMNVKVWDLFYEADRVREMLAKFIKEEALRTYLFTYSNVYASISVPYLAEMFDLPKSKVHSLISKMIINEELMASLDDPTETVVLHRSEPSRLQALSMQLADKVTNLVDSNERVFEMKQGNFFQRGGNQGYNRDRQNYRNQNQNRENWNNNRRQDRGNRNRNQNRDREQREQHRVEFEEKAE.

2 disordered regions span residues methionine 1–aspartate 38 and phenylalanine 156–lysine 290. Residues isoleucine 22–phenylalanine 32 show a composition bias toward polar residues. Residues aspartate 161 to alanine 183 show a composition bias toward acidic residues. Over residues phenylalanine 194 to lysine 206 the composition is skewed to basic and acidic residues. Positions aspartate 207 to alanine 232 are enriched in acidic residues. Residues isoleucine 237–lysine 247 show a composition bias toward basic and acidic residues. Positions lysine 257 to lysine 272 are enriched in basic residues. One can recognise a PCI domain in the interval phenylalanine 636–proline 812. Residues arginine 847–glutamate 904 form a disordered region. The span at tyrosine 860–asparagine 873 shows a compositional bias: low complexity. The span at arginine 874–glutamate 904 shows a compositional bias: basic and acidic residues.

This sequence belongs to the eIF-3 subunit C family. In terms of assembly, component of the eukaryotic translation initiation factor 3 (eIF-3) complex.

The protein localises to the cytoplasm. In terms of biological role, component of the eukaryotic translation initiation factor 3 (eIF-3) complex, which is involved in protein synthesis of a specialized repertoire of mRNAs and, together with other initiation factors, stimulates binding of mRNA and methionyl-tRNAi to the 40S ribosome. The eIF-3 complex specifically targets and initiates translation of a subset of mRNAs involved in cell proliferation. In Culex quinquefasciatus (Southern house mosquito), this protein is Eukaryotic translation initiation factor 3 subunit C.